The sequence spans 528 residues: Lysine--tRNA ligase (528 aa).

The 'HIGH' region motif lies at 44–52 (PSGLPHIGT). Positions 290–294 (KISKS) match the 'KMSKS' region motif. Lys-293 lines the ATP pocket.

Belongs to the class-I aminoacyl-tRNA synthetase family.

The protein resides in the cytoplasm. The catalysed reaction is tRNA(Lys) + L-lysine + ATP = L-lysyl-tRNA(Lys) + AMP + diphosphate. The chain is Lysine--tRNA ligase (lysS) from Rickettsia prowazekii (strain Madrid E).